The chain runs to 169 residues: E1B protein, small T-antigen (169 aa).

It belongs to the adenoviridae E1B 19 kDa protein family.

The protein is E1B protein, small T-antigen of Canis lupus familiaris (Dog).